The sequence spans 223 residues: Phosphoribosylformylglycinamidine synthase subunit PurQ (223 aa).

In terms of domain architecture, Glutamine amidotransferase type-1 spans 2–223; that stretch reads KIAVVVFPGS…KSLLKAGVQA (222 aa). Catalysis depends on Cys86, which acts as the Nucleophile. Catalysis depends on residues His195 and Glu197.

Part of the FGAM synthase complex composed of 1 PurL, 1 PurQ and 2 PurS subunits.

It localises to the cytoplasm. The catalysed reaction is N(2)-formyl-N(1)-(5-phospho-beta-D-ribosyl)glycinamide + L-glutamine + ATP + H2O = 2-formamido-N(1)-(5-O-phospho-beta-D-ribosyl)acetamidine + L-glutamate + ADP + phosphate + H(+). The enzyme catalyses L-glutamine + H2O = L-glutamate + NH4(+). Its pathway is purine metabolism; IMP biosynthesis via de novo pathway; 5-amino-1-(5-phospho-D-ribosyl)imidazole from N(2)-formyl-N(1)-(5-phospho-D-ribosyl)glycinamide: step 1/2. In terms of biological role, part of the phosphoribosylformylglycinamidine synthase complex involved in the purines biosynthetic pathway. Catalyzes the ATP-dependent conversion of formylglycinamide ribonucleotide (FGAR) and glutamine to yield formylglycinamidine ribonucleotide (FGAM) and glutamate. The FGAM synthase complex is composed of three subunits. PurQ produces an ammonia molecule by converting glutamine to glutamate. PurL transfers the ammonia molecule to FGAR to form FGAM in an ATP-dependent manner. PurS interacts with PurQ and PurL and is thought to assist in the transfer of the ammonia molecule from PurQ to PurL. This chain is Phosphoribosylformylglycinamidine synthase subunit PurQ, found in Lactobacillus acidophilus (strain ATCC 700396 / NCK56 / N2 / NCFM).